A 430-amino-acid polypeptide reads, in one-letter code: DNA-binding protein cre-1 (430 aa).

Residues 1 to 19 (MQRVQSAVDFSNLLNPSES) are compositionally biased toward polar residues. 4 disordered regions span residues 1 to 77 (MQRV…LPRP), 97 to 187 (IRTH…PHSY), 265 to 340 (SRSH…RNLS), and 357 to 430 (LDGQ…MDRL). The segment covering 30–46 (PRQQTAQPQQQQQQPQP) has biased composition (low complexity). 2 C2H2-type zinc fingers span residues 78 to 100 (YKCP…IRTH) and 106 to 130 (HACQ…SRIH). A compositionally biased stretch (basic and acidic residues) spans 97–106 (IRTHTGEKPH). Composition is skewed to polar residues over residues 130 to 147 (HSNP…QQQH) and 175 to 187 (AMSS…PHSY). The segment covering 268-277 (HSHEDHDDHY) has biased composition (basic and acidic residues). The segment covering 289–303 (PNSPNSTAPSSPTFS) has biased composition (low complexity). Positions 412–422 (SVRNSSSTSLS) are enriched in polar residues.

It belongs to the creA/MIG C2H2-type zinc-finger protein family.

It is found in the nucleus. Functionally, involved in carbon catabolite repression. Represses the transcription of a number of genes by binding to a GC-rich region in their promoter. The polypeptide is DNA-binding protein cre-1 (cre-1) (Neurospora crassa (strain ATCC 24698 / 74-OR23-1A / CBS 708.71 / DSM 1257 / FGSC 987)).